Consider the following 262-residue polypeptide: ATP synthase subunit a (262 aa).

Helical transmembrane passes span A24–F44, V84–L104, D129–V149, P165–A185, L194–A214, and L228–L248.

It belongs to the ATPase A chain family. As to quaternary structure, F-type ATPases have 2 components, CF(1) - the catalytic core - and CF(0) - the membrane proton channel. CF(1) has five subunits: alpha(3), beta(3), gamma(1), delta(1), epsilon(1). CF(0) has three main subunits: a(1), b(2) and c(9-12). The alpha and beta chains form an alternating ring which encloses part of the gamma chain. CF(1) is attached to CF(0) by a central stalk formed by the gamma and epsilon chains, while a peripheral stalk is formed by the delta and b chains.

The protein localises to the cell inner membrane. Key component of the proton channel; it plays a direct role in the translocation of protons across the membrane. This Actinobacillus pleuropneumoniae serotype 7 (strain AP76) protein is ATP synthase subunit a.